A 530-amino-acid polypeptide reads, in one-letter code: Capsid protein VP1 (530 aa).

Residues M1–Q20 form a disordered region. The shell domain stretch occupies residues M1–E225. The tract at residues Q226–G278 is P1 sub-domain 1. The segment at Q226–R530 is protruding domain. The tract at residues T279 to L405 is P2 sub-domain. Residues A406 to R530 form a P1 sub-domain 2 region. The plays a role in binding to host histo-blood group structures antigens and in the formation of P-particles stretch occupies residues R523–R530.

The protein belongs to the caliciviridae capsid protein family. In terms of assembly, homodimer. Homomultimer. Interacts with the minor capsid protein VP2. Interacts (via C-terminus) with host type I histo-blood group structures antigens at the surface of target cells. In terms of processing, may be cleaved by host protease to generate soluble capsid protein. Assembled capsid cannot be cleaved.

It is found in the virion. The protein localises to the host cytoplasm. Functionally, capsid protein self assembles to form an icosahedral capsid with a T=3 symmetry, about 38 nm in diameter, and consisting of 180 capsid proteins. A smaller form of capsid with a diameter of 23 nm might be capsid proteins assembled as icosahedron with T=1 symmetry. The capsid encapsulates the genomic RNA and is decorated with VP2 proteins. Attaches virion to target cells by binding histo-blood group antigens (HBGAs) present on gastroduodenal epithelial cells. Its function is as follows. The soluble capsid protein may play a role in viral immunoevasion. The sequence is that of Capsid protein VP1 from Norovirus (strain Human/NoV/United States/Norwalk/1968/GI) (Hu/NV/NV/1968/US).